Reading from the N-terminus, the 331-residue chain is Ketol-acid reductoisomerase (NADP(+)) (331 aa).

One can recognise a KARI N-terminal Rossmann domain in the interval 2-182; the sequence is ARMYYDQDAN…GGTRAGILET (181 aa). NADP(+)-binding positions include 25–28, Ser-51, Ser-53, and 83–86; these read YGSQ and DEVQ. His-108 is an active-site residue. Residue Gly-134 coordinates NADP(+). A KARI C-terminal knotted domain is found at 183–328; the sequence is TFREETETDL…KDLRAMFSWL (146 aa). Mg(2+) contacts are provided by Asp-191, Glu-195, Glu-227, and Glu-231. Residue Ser-252 coordinates substrate.

This sequence belongs to the ketol-acid reductoisomerase family. In terms of assembly, homooctamer. It depends on Mg(2+) as a cofactor.

The enzyme catalyses (2R)-2,3-dihydroxy-3-methylbutanoate + NADP(+) = (2S)-2-acetolactate + NADPH + H(+). It carries out the reaction (2R,3R)-2,3-dihydroxy-3-methylpentanoate + NADP(+) = (S)-2-ethyl-2-hydroxy-3-oxobutanoate + NADPH + H(+). It functions in the pathway amino-acid biosynthesis; L-isoleucine biosynthesis; L-isoleucine from 2-oxobutanoate: step 2/4. The protein operates within amino-acid biosynthesis; L-valine biosynthesis; L-valine from pyruvate: step 2/4. In terms of biological role, involved in the biosynthesis of branched-chain amino acids (BCAA). Catalyzes an alkyl-migration followed by a ketol-acid reduction of (S)-2-acetolactate (S2AL) to yield (R)-2,3-dihydroxy-isovalerate. In the isomerase reaction, S2AL is rearranged via a Mg-dependent methyl migration to produce 3-hydroxy-3-methyl-2-ketobutyrate (HMKB). In the reductase reaction, this 2-ketoacid undergoes a metal-dependent reduction by NADPH to yield (R)-2,3-dihydroxy-isovalerate. The polypeptide is Ketol-acid reductoisomerase (NADP(+)) (Synechocystis sp. (strain ATCC 27184 / PCC 6803 / Kazusa)).